Here is a 489-residue protein sequence, read N- to C-terminus: Probable guanine deaminase (489 aa).

Positions 100 and 102 each coordinate Zn(2+). Substrate contacts are provided by residues 102–105, 231–232, 258–261, and aspartate 348; these read HVSQ, RF, and HLSE. Residues histidine 258 and aspartate 348 each coordinate Zn(2+).

Belongs to the metallo-dependent hydrolases superfamily. ATZ/TRZ family. It depends on Zn(2+) as a cofactor.

It is found in the cytoplasm. It catalyses the reaction guanine + H2O + H(+) = xanthine + NH4(+). It functions in the pathway purine metabolism; guanine degradation; xanthine from guanine: step 1/1. In terms of biological role, catalyzes the hydrolytic deamination of guanine, producing xanthine and ammonia. This Saccharomyces cerevisiae (strain ATCC 204508 / S288c) (Baker's yeast) protein is Probable guanine deaminase (GUD1).